We begin with the raw amino-acid sequence, 111 residues long: Cornifelin (111 aa).

This sequence belongs to the cornifelin family. In terms of assembly, directly or indirectly cross-linked to CE proteins loricin and involucrin (IVL).

The protein resides in the cytoplasm. In terms of biological role, part of the insoluble cornified cell envelope (CE) of stratified squamous epithelia. This is Cornifelin (CNFN) from Bos taurus (Bovine).